Reading from the N-terminus, the 404-residue chain is Deoxyguanosinetriphosphate triphosphohydrolase-like protein (404 aa).

Residues 1 to 33 (MSVGMAAPRAAFSCDPDRSRGRQFAEPPSSNRS) are disordered. Residues 69-217 (RLTHSLEVAQ…AALADDIAYD (149 aa)) enclose the HD domain.

The protein belongs to the dGTPase family. Type 2 subfamily.

This chain is Deoxyguanosinetriphosphate triphosphohydrolase-like protein, found in Rhodopseudomonas palustris (strain HaA2).